The sequence spans 580 residues: MKASQSFLATLKEAPSDAEVVSHKLMVRAGLIRKLSAGVYNYLPLGLKVIRKVENIIREEMNRAGAIELLMPMIQPAELWQETGRWEKMGPELLRIKDRHDRDFLIQPTSEEVVTDLARNEIKSYKQLPVNFYQIQTKFRDERRPRFGIMRGREFSMKDAYSFDRDTEGLKKSYQIMFDAYTRIFKRMGLQFRAVTADNGAIGGSGSQEFHVIADTGEDAIVYCPDSDYAANLEAAESLALIASRAAASVAMAKVPTPDKTNCADVAKFLNIPIESTVKSLLFVADQENGPAKLFMLLVRGDHELNEVKASKIPGMAESRFASEAEIKLACNAPAGYLGPVGVSADATVVADRTVANMADFVCGANDAGHHLTGVNWGRDLPEPLVLDIRNAVVGDPSPDGKGVVDICRGIEVGHVFQLGTRYSEAMGCTYLDQQGKAQPMVMGCYGIGVTRLLGAAIEQGHDEKGIIWPISMAPCEVVICPMGYEKSEAVKAACDQLHDGLLAAGVDVILDDRNERPGAMFADWGLIGAPFRVVIGDRGLVDSQVEFKGRTDAESQNIPLTQIKEKVIAAIQTTKQSIV.

It belongs to the class-II aminoacyl-tRNA synthetase family. ProS type 1 subfamily. Homodimer.

The protein resides in the cytoplasm. The catalysed reaction is tRNA(Pro) + L-proline + ATP = L-prolyl-tRNA(Pro) + AMP + diphosphate. Functionally, catalyzes the attachment of proline to tRNA(Pro) in a two-step reaction: proline is first activated by ATP to form Pro-AMP and then transferred to the acceptor end of tRNA(Pro). As ProRS can inadvertently accommodate and process non-cognate amino acids such as alanine and cysteine, to avoid such errors it has two additional distinct editing activities against alanine. One activity is designated as 'pretransfer' editing and involves the tRNA(Pro)-independent hydrolysis of activated Ala-AMP. The other activity is designated 'posttransfer' editing and involves deacylation of mischarged Ala-tRNA(Pro). The misacylated Cys-tRNA(Pro) is not edited by ProRS. This Polynucleobacter necessarius subsp. necessarius (strain STIR1) protein is Proline--tRNA ligase.